The primary structure comprises 409 residues: Elongation factor Tu, cyanelle (409 aa).

The tr-type G domain maps to 10-214 (KPHVNIGTIG…AVDEYIPTPE (205 aa)). The segment at 19 to 26 (GHVDHGKT) is G1. Residue 19-26 (GHVDHGKT) coordinates GTP. T26 is a binding site for Mg(2+). A G2 region spans residues 60–64 (GITIN). The interval 81–84 (DCPG) is G3. GTP is bound by residues 81–85 (DCPGH) and 136–139 (NKED). Residues 136 to 139 (NKED) form a G4 region. The tract at residues 174–176 (SAL) is G5.

This sequence belongs to the TRAFAC class translation factor GTPase superfamily. Classic translation factor GTPase family. EF-Tu/EF-1A subfamily.

It is found in the plastid. The protein resides in the cyanelle. The catalysed reaction is GTP + H2O = GDP + phosphate + H(+). Functionally, GTP hydrolase that promotes the GTP-dependent binding of aminoacyl-tRNA to the A-site of ribosomes during protein biosynthesis. This is Elongation factor Tu, cyanelle (tufA) from Cyanophora paradoxa.